We begin with the raw amino-acid sequence, 149 residues long: Calmodulin (149 aa).

4 EF-hand domains span residues 8-43, 44-79, 81-116, and 117-149; these read EQIA…LGQN, PTEA…KMKD, DSEE…LGEK, and LTDE…MMSK. Residues aspartate 21, aspartate 23, aspartate 25, threonine 27, glutamate 32, aspartate 57, aspartate 59, asparagine 61, threonine 63, glutamate 68, aspartate 94, aspartate 96, asparagine 98, glutamate 105, aspartate 130, aspartate 132, aspartate 134, glutamine 136, and glutamate 141 each contribute to the Ca(2+) site.

This sequence belongs to the calmodulin family.

Its function is as follows. Calmodulin mediates the control of a large number of enzymes, ion channels and other proteins by Ca(2+). Among the enzymes to be stimulated by the calmodulin-Ca(2+) complex are a number of protein kinases and phosphatases. The protein is Calmodulin of Globisporangium splendens (Leaf rot fungus).